Consider the following 160-residue polypeptide: Protein Bel-3 (160 aa).

As to quaternary structure, homodimer.

The protein localises to the host cytoplasm. This chain is Protein Bel-3 (bel3), found in Human spumaretrovirus (SFVcpz(hu)).